A 712-amino-acid polypeptide reads, in one-letter code: MSQEKQVFSIDLAGRQLTVETGQLAKQANGAVLVRYGDTAVLSTATASKEAKNVDFFPLTVNYEERLYAVGKIPGGFIKREGRPSEKAILASRLIDRPIRPLFADGFRNEVQVVNIVMSVDQDCSSEMAAMLGSSLALSISDIPFEGPIAGATVGRINGEFVINPTVEQQEQSDIHLVVAGTKDAINMVEAGADQVPEETMLEAIMFGHDEIKRLIAFQEEIVQAVGKEKSEVKLYEVDADLNQAVREMAEKDMHSAIQVHEKHAREDAINEVKKRVIEHYEAQEADADTLGQVNEILYKIVKEEVRRLITVEKIRPDGRKGDEIRPLASEVGILSRTHGSGLFTRGQTQALSICTLGALGDVQILDGLGVEESKRFMHHYNFPSFSVGETRPMRGPGRREIGHGALGERALEPVIPSEKDFPYTVRLVSEVLESNGSTSQASICGSTLAMMDAGVPLKAPVAGIAMGLVKTGEHYTILSDIQGMEDHLGDMDFKVAGTAHGVTALQMDIKIDGLSREILEEALQQAKVGRVHILNHMLSVIAEPRTELSAYAPKIITMTINPDKIRDVIGPSGKQINKIIEETGVKIDIEQDGTVFISSINQEMNDKAKKIIEDIVREVQVGEIYEGKVKRVEKFGAFVELFSGKDGLVHISELALERVGKVEDVVKIGDVITVKVIEIDKQGRVNLSRKVLLKEEQEKEAAKEENKQEQQ.

Asp-487 and Asp-493 together coordinate Mg(2+). A KH domain is found at 554-613 (PKIITMTINPDKIRDVIGPSGKQINKIIEETGVKIDIEQDGTVFISSINQEMNDKAKKII). Positions 623–691 (GEIYEGKVKR…KQGRVNLSRK (69 aa)) constitute an S1 motif domain.

This sequence belongs to the polyribonucleotide nucleotidyltransferase family. Mg(2+) serves as cofactor.

It localises to the cytoplasm. The catalysed reaction is RNA(n+1) + phosphate = RNA(n) + a ribonucleoside 5'-diphosphate. Its function is as follows. Involved in mRNA degradation. Catalyzes the phosphorolysis of single-stranded polyribonucleotides processively in the 3'- to 5'-direction. The protein is Polyribonucleotide nucleotidyltransferase of Bacillus anthracis.